The sequence spans 837 residues: A disintegrin and metalloproteinase with thrombospondin motifs 4 (837 aa).

Positions 1–51 (MSQTGSHPGRGLAGRWLWGAQPCLLLPIVPLSWLVWLLLLLLASLLPSARL) are cleaved as a signal peptide. Residues 52–212 (ASPLPREEEI…PSPRPRRAKR (161 aa)) constitute a propeptide that is removed on maturation. A glycan (N-linked (GlcNAc...) asparagine) is linked at Asn68. The interval 166 to 191 (EGGTPNSAGGPGAHILRRKSPASGQG) is disordered. The Cysteine switch motif lies at 192 to 199 (PMCNVKAP). Residue Cys194 coordinates Zn(2+). The Peptidase M12B domain maps to 218 to 428 (RFVETLVVAD…GYGHCLLDKP (211 aa)). Intrachain disulfides connect Cys293-Cys345, Cys322-Cys327, Cys339-Cys423, Cys377-Cys407, Cys449-Cys472, Cys460-Cys482, Cys467-Cys501, Cys495-Cys506, Cys532-Cys569, Cys536-Cys574, and Cys547-Cys559. His361 is a Zn(2+) binding site. Residue Glu362 is part of the active site. Residues His365 and His371 each contribute to the Zn(2+) site. One can recognise a Disintegrin domain in the interval 437-519 (TFPGKDYDAD…DQLQDFNIPQ (83 aa)). A TSP type-1 domain is found at 520 to 575 (AGGWGPWGPWGDCSRTCGGGVQFSSRDCTRPVPRNGGKYCEGRRTRFRSCNTEDCP). Residues 686–837 (SKQSGSFRKF…LRRRPWVGRK (152 aa)) are spacer.

As to quaternary structure, interacts with SRPX2. Requires Zn(2+) as cofactor. The precursor is cleaved by a furin endopeptidase. Post-translationally, glycosylated. Can be O-fucosylated by POFUT2 on a serine or a threonine residue found within the consensus sequence C1-X(2)-(S/T)-C2-G of the TSP type-1 repeat domains where C1 and C2 are the first and second cysteine residue of the repeat, respectively. Fucosylated repeats can then be further glycosylated by the addition of a beta-1,3-glucose residue by the glucosyltransferase, B3GALTL. Fucosylation mediates the efficient secretion of ADAMTS family members. Can also be C-glycosylated with one or two mannose molecules on tryptophan residues within the consensus sequence W-X-X-W of the TPRs, and N-glycosylated. These other glycosylations can also facilitate secretion.

Its subcellular location is the secreted. The protein localises to the extracellular space. It is found in the extracellular matrix. The enzyme catalyses Glutamyl endopeptidase. Bonds cleaved include 370-Thr-Glu-Gly-Glu-|-Ala-Arg-Gly-Ser-377 in the interglobular domain of mammalian aggrecan.. In terms of biological role, cleaves aggrecan, a cartilage proteoglycan, at the '392-Glu-|-Ala-393' site and may be involved in its turnover. Also cleaves COMP. May play an important role in the destruction of aggrecan in arthritic diseases. The chain is A disintegrin and metalloproteinase with thrombospondin motifs 4 (ADAMTS4) from Pongo abelii (Sumatran orangutan).